Here is a 152-residue protein sequence, read N- to C-terminus: Calcium-binding protein SPEC 1A (152 aa).

4 consecutive EF-hand domains span residues 10–45 (EEVT…TGKS), 46–81 (YTDK…QMVK), 84–119 (WKEE…SKPP), and 120–152 (MKRK…IKSC). Ca(2+)-binding residues include aspartate 23, aspartate 25, serine 27, serine 29, glutamate 34, aspartate 59, aspartate 61, serine 63, threonine 65, glutamate 70, aspartate 97, aspartate 99, asparagine 101, serine 103, glutamate 108, aspartate 133, asparagine 135, aspartate 137, lysine 139, and glutamate 144. Positions 95 to 121 (DMDKDGNGSLSPQELREALSASKPPMK) are disordered.

Found in cell lineages giving rise to the aboral ectoderm, a squamous epithelium covering the surface of the late stage embryo and larva.

Functionally, calcium-binding protein involved in larval development and metamorphosis. Likely to function as calcium buffers mediating the transport of calcium from the sea water to the blastocoel where calcium is required for skeleton formation. This chain is Calcium-binding protein SPEC 1A (SPEC1), found in Strongylocentrotus purpuratus (Purple sea urchin).